The sequence spans 248 residues: Probable transcriptional regulatory protein PLES_43501 (248 aa).

Belongs to the TACO1 family.

It localises to the cytoplasm. This is Probable transcriptional regulatory protein PLES_43501 from Pseudomonas aeruginosa (strain LESB58).